We begin with the raw amino-acid sequence, 137 residues long: Small ribosomal subunit protein uS12 (137 aa).

A 3-methylthioaspartic acid modification is found at aspartate 102.

Belongs to the universal ribosomal protein uS12 family. As to quaternary structure, part of the 30S ribosomal subunit. Contacts proteins S8 and S17. May interact with IF1 in the 30S initiation complex.

Its function is as follows. With S4 and S5 plays an important role in translational accuracy. Functionally, interacts with and stabilizes bases of the 16S rRNA that are involved in tRNA selection in the A site and with the mRNA backbone. Located at the interface of the 30S and 50S subunits, it traverses the body of the 30S subunit contacting proteins on the other side and probably holding the rRNA structure together. The combined cluster of proteins S8, S12 and S17 appears to hold together the shoulder and platform of the 30S subunit. This chain is Small ribosomal subunit protein uS12, found in Phytoplasma mali (strain AT).